The following is a 159-amino-acid chain: Probable E3 ubiquitin-protein ligase RHA1A (159 aa).

Residues 86-130 (CTVCLSDFESDDKVRQLPKCGHVFHHYCLDRWIVDYNKMKCPVCR) form an RING-type; atypical zinc finger.

As to expression, predominantly expressed in stems.

It carries out the reaction S-ubiquitinyl-[E2 ubiquitin-conjugating enzyme]-L-cysteine + [acceptor protein]-L-lysine = [E2 ubiquitin-conjugating enzyme]-L-cysteine + N(6)-ubiquitinyl-[acceptor protein]-L-lysine.. Its pathway is protein modification; protein ubiquitination. In terms of biological role, probable E3 ubiquitin-protein ligase that may possess E3 ubiquitin ligase activity in vitro. In Arabidopsis thaliana (Mouse-ear cress), this protein is Probable E3 ubiquitin-protein ligase RHA1A.